Consider the following 76-residue polypeptide: NPCSCSQSHCCSRYLCMGAMSLFLPCLLCYPPAKGCLKLCRGCYDRVNRPGCRCKNSNTVYCKLESCPSRGQGKPS.

Positions 1–52 (NPCSCSQSHCCSRYLCMGAMSLFLPCLLCYPPAKGCLKLCRGCYDRVNRPGC) constitute an SPR domain.

Belongs to the sprouty family. As to expression, brain and interlimb region.

It localises to the cytoplasm. Its subcellular location is the membrane. Functionally, inhibits fibroblast growth factor (FGF)-induced retinal lens fiber differentiation. Inhibits TGFB-induced epithelial-to-mesenchymal transition in lens epithelial cells. The polypeptide is Protein sprouty homolog 1 (SPRY1) (Gallus gallus (Chicken)).